The primary structure comprises 326 residues: Putative ubiquitin-conjugating enzyme E2 38 (326 aa).

A UBC core domain is found at 54–214; that stretch reads NWVKKVQDEW…VFLLSLKTMV (161 aa). The Glycyl thioester intermediate role is filled by Cys140. Residues 297 to 326 form a disordered region; that stretch reads LAEKPKPPVNNANTENQSKKKTRKRSRSSR. Over residues 315-326 the composition is skewed to basic residues; that stretch reads KKKTRKRSRSSR.

This sequence belongs to the ubiquitin-conjugating enzyme family.

The catalysed reaction is S-ubiquitinyl-[E1 ubiquitin-activating enzyme]-L-cysteine + [E2 ubiquitin-conjugating enzyme]-L-cysteine = [E1 ubiquitin-activating enzyme]-L-cysteine + S-ubiquitinyl-[E2 ubiquitin-conjugating enzyme]-L-cysteine.. Its pathway is protein modification; protein ubiquitination. Accepts the ubiquitin from the E1 complex and catalyzes its covalent attachment to other proteins. In Arabidopsis thaliana (Mouse-ear cress), this protein is Putative ubiquitin-conjugating enzyme E2 38 (UBC38).